The chain runs to 188 residues: Elongation factor P (188 aa).

This sequence belongs to the elongation factor P family.

The protein localises to the cytoplasm. Its pathway is protein biosynthesis; polypeptide chain elongation. Functionally, involved in peptide bond synthesis. Stimulates efficient translation and peptide-bond synthesis on native or reconstituted 70S ribosomes in vitro. Probably functions indirectly by altering the affinity of the ribosome for aminoacyl-tRNA, thus increasing their reactivity as acceptors for peptidyl transferase. This Ureaplasma urealyticum serovar 10 (strain ATCC 33699 / Western) protein is Elongation factor P.